The chain runs to 64 residues: Large ribosomal subunit protein uL30 (64 aa).

It belongs to the universal ribosomal protein uL30 family. In terms of assembly, part of the 50S ribosomal subunit.

The sequence is that of Large ribosomal subunit protein uL30 from Bradyrhizobium diazoefficiens (strain JCM 10833 / BCRC 13528 / IAM 13628 / NBRC 14792 / USDA 110).